Consider the following 279-residue polypeptide: Sperm acrosome membrane-associated protein 1 (279 aa).

The N-terminal stretch at 1–29 (MKSRGAGCSARLLLTVGWLLLAGLQSTCG) is a signal peptide. Residues 30-221 (INVTAIQDPS…VIICIFVIFV (192 aa)) lie on the Extracellular side of the membrane. The N-linked (GlcNAc...) asparagine glycan is linked to asparagine 31. Residues 39 to 74 (SLAREGEGEPEGDEEPENDSETEKEPQAEAEDDSEG) form a disordered region. A compositionally biased stretch (acidic residues) spans 46-58 (GEPEGDEEPENDS). The helical transmembrane segment at 222-242 (LIFIIINWTAVKDFWAKASTT) threads the bilayer. The Cytoplasmic segment spans residues 243-279 (EIQSELSSMRYKDSTSLDQSPTDIPGHEDDALSEWNE). Tyrosine 253 carries the phosphotyrosine modification. The tract at residues 253 to 279 (YKDSTSLDQSPTDIPGHEDDALSEWNE) is disordered. Phosphoserine occurs at positions 262 and 275.

In terms of assembly, interacts with CYLC1; the interaction may be relevant for proper acrosome attachment to the nuclear envelope. In terms of processing, N-glycosylated.

It is found in the cytoplasmic vesicle. The protein resides in the secretory vesicle. The protein localises to the acrosome inner membrane. Its function is as follows. Plays a role in acrosome expansion and establishment of normal sperm morphology during spermatogenesis. Important for male fertility. In Bos taurus (Bovine), this protein is Sperm acrosome membrane-associated protein 1 (SPACA1).